Reading from the N-terminus, the 186-residue chain is Putative 3-methyladenine DNA glycosylase (186 aa).

The protein belongs to the DNA glycosylase MPG family.

This chain is Putative 3-methyladenine DNA glycosylase, found in Borrelia garinii subsp. bavariensis (strain ATCC BAA-2496 / DSM 23469 / PBi) (Borreliella bavariensis).